The primary structure comprises 322 residues: MLDKIWYRSKPNLLSRVLQPISLVFIDIANKRKIKQQLKQYKSKIPIIVVGNISVGGTGKTPVVRMLAQQYLAQDKKPAIISRGYGAKADNYPFEVTSGTLATQCGDEPAMLFDALQAQVPIVIAPERVQAVKYIEKNFPDTDIIMSDDGLQHYKLARDKEIVVVDAIRMFGNKLCLPAGPLREPIERLKEVDQIIVIGNCSDKDKELLKNYKNVTYAKVVATEFVNILTAKKVAKTEFNHQNAIAIAGIGNPTKFFKTLEESAINITAKKVFKDHHKFTQSDFEGIDSDITVVMTYKDAIKCKNFAKANWWYLDIALDINV.

Residue 54–61 (SVGGTGKT) participates in ATP binding.

The protein belongs to the LpxK family.

The catalysed reaction is a lipid A disaccharide + ATP = a lipid IVA + ADP + H(+). It participates in glycolipid biosynthesis; lipid IV(A) biosynthesis; lipid IV(A) from (3R)-3-hydroxytetradecanoyl-[acyl-carrier-protein] and UDP-N-acetyl-alpha-D-glucosamine: step 6/6. Its function is as follows. Transfers the gamma-phosphate of ATP to the 4'-position of a tetraacyldisaccharide 1-phosphate intermediate (termed DS-1-P) to form tetraacyldisaccharide 1,4'-bis-phosphate (lipid IVA). In Francisella tularensis subsp. tularensis (strain FSC 198), this protein is Tetraacyldisaccharide 4'-kinase.